Consider the following 142-residue polypeptide: uncharacterized protein (142 aa).

Residues 70-94 are disordered; that stretch reads PKSVSNSKKKKEKAEKGLLRPTTKP. The span at 81-94 shows a compositional bias: basic and acidic residues; sequence EKAEKGLLRPTTKP.

This is an uncharacterized protein from Bacillus subtilis (strain 168).